A 464-amino-acid chain; its full sequence is Fumarate hydratase class II (464 aa).

Residues 98 to 100, 129 to 132, 139 to 141, and Thr-187 contribute to the substrate site; these read SGT, HPND, and SSN. His-188 functions as the Proton donor/acceptor in the catalytic mechanism. Ser-318 is a catalytic residue. Residues Ser-319 and 324–326 contribute to the substrate site; that span reads KVN.

This sequence belongs to the class-II fumarase/aspartase family. Fumarase subfamily. In terms of assembly, homotetramer.

Its subcellular location is the cytoplasm. It catalyses the reaction (S)-malate = fumarate + H2O. It functions in the pathway carbohydrate metabolism; tricarboxylic acid cycle; (S)-malate from fumarate: step 1/1. Functionally, involved in the TCA cycle. Catalyzes the stereospecific interconversion of fumarate to L-malate. The polypeptide is Fumarate hydratase class II (Wigglesworthia glossinidia brevipalpis).